Reading from the N-terminus, the 88-residue chain is Apolipoprotein C-I (88 aa).

Residues 1-26 (MRLFLSLPVLVVVLAMVLEGPAPTQA) form the signal peptide.

This sequence belongs to the apolipoprotein C1 family.

The protein localises to the secreted. In terms of biological role, inhibitor of lipoprotein binding to the low density lipoprotein (LDL) receptor, LDL receptor-related protein, and very low density lipoprotein (VLDL) receptor. Associates with high density lipoproteins (HDL) and the triacylglycerol-rich lipoproteins in the plasma and makes up about 10% of the protein of the VLDL and 2% of that of HDL. Appears to interfere directly with fatty acid uptake and is also the major plasma inhibitor of cholesteryl ester transfer protein (CETP). Binds free fatty acids and reduces their intracellular esterification. Modulates the interaction of APOE with beta-migrating VLDL and inhibits binding of beta-VLDL to the LDL receptor-related protein. This Leptonychotes weddellii (Weddell seal) protein is Apolipoprotein C-I (APOC1).